Here is a 333-residue protein sequence, read N- to C-terminus: GTP 3',8-cyclase (333 aa).

The 215-residue stretch at 7-221 folds into the Radical SAM core domain; sequence KFGRVHDYIR…FEACNEAGYE (215 aa). A GTP-binding site is contributed by R16. [4Fe-4S] cluster contacts are provided by C23 and C27. An S-adenosyl-L-methionine-binding site is contributed by Y29. Residue C30 participates in [4Fe-4S] cluster binding. A GTP-binding site is contributed by R66. Residue G70 coordinates S-adenosyl-L-methionine. T97 is a binding site for GTP. S121 serves as a coordination point for S-adenosyl-L-methionine. K158 is a binding site for GTP. S-adenosyl-L-methionine is bound at residue M192. Residues C257 and C260 each contribute to the [4Fe-4S] cluster site. 262–264 contributes to the GTP binding site; the sequence is RLR. C274 lines the [4Fe-4S] cluster pocket.

This sequence belongs to the radical SAM superfamily. MoaA family. In terms of assembly, monomer and homodimer. Requires [4Fe-4S] cluster as cofactor.

The catalysed reaction is GTP + AH2 + S-adenosyl-L-methionine = (8S)-3',8-cyclo-7,8-dihydroguanosine 5'-triphosphate + 5'-deoxyadenosine + L-methionine + A + H(+). It functions in the pathway cofactor biosynthesis; molybdopterin biosynthesis. In terms of biological role, catalyzes the cyclization of GTP to (8S)-3',8-cyclo-7,8-dihydroguanosine 5'-triphosphate. This is GTP 3',8-cyclase from Listeria monocytogenes serotype 4b (strain CLIP80459).